Consider the following 265-residue polypeptide: Undecaprenyl-diphosphatase (265 aa).

Helical transmembrane passes span Met1 to Ile21, Gln39 to Phe59, Trp86 to Ile106, Ser112 to Ala132, Leu140 to Ile160, Phe186 to Leu206, Val219 to Ile239, and Met244 to Phe264.

Belongs to the UppP family.

The protein resides in the cell inner membrane. The enzyme catalyses di-trans,octa-cis-undecaprenyl diphosphate + H2O = di-trans,octa-cis-undecaprenyl phosphate + phosphate + H(+). Its function is as follows. Catalyzes the dephosphorylation of undecaprenyl diphosphate (UPP). Confers resistance to bacitracin. This chain is Undecaprenyl-diphosphatase, found in Saccharophagus degradans (strain 2-40 / ATCC 43961 / DSM 17024).